We begin with the raw amino-acid sequence, 157 residues long: Phosphopantetheine adenylyltransferase (157 aa).

T10 lines the substrate pocket. ATP-binding positions include 10-11 (TF) and H18. Substrate-binding residues include K42, L74, and R88. ATP is bound by residues 89-91 (GLR), E99, and 124-130 (NAFISSS).

This sequence belongs to the bacterial CoaD family. In terms of assembly, homohexamer. Mg(2+) is required as a cofactor.

It is found in the cytoplasm. It carries out the reaction (R)-4'-phosphopantetheine + ATP + H(+) = 3'-dephospho-CoA + diphosphate. It functions in the pathway cofactor biosynthesis; coenzyme A biosynthesis; CoA from (R)-pantothenate: step 4/5. Its function is as follows. Reversibly transfers an adenylyl group from ATP to 4'-phosphopantetheine, yielding dephospho-CoA (dPCoA) and pyrophosphate. The polypeptide is Phosphopantetheine adenylyltransferase (Helicobacter acinonychis (strain Sheeba)).